The following is a 228-amino-acid chain: Ferric nitrobindin-like protein (228 aa).

The segment at 1 to 21 (MTSDEVRDGAGSPADSSKGNK) is disordered. Positions 75-81 (GVWRGEG) match the GXWXGXG motif.

This sequence belongs to the nitrobindin family.

This is Ferric nitrobindin-like protein from Mycobacterium leprae (strain TN).